The chain runs to 543 residues: Probable protein kinase UbiB (543 aa).

Residues 123–500 (DFDQQPLASA…HRRHAQARFL (378 aa)) form the Protein kinase domain. Residues 129-137 (LASASVAQV) and Lys-152 each bind ATP. The Proton acceptor role is filled by Asp-286. The next 2 helical transmembrane spans lie at 499–519 (FLLGAGATLLLGSILLLPTHE) and 521–541 (LASAGLTISIICWLNGWWKIS).

It belongs to the ABC1 family. UbiB subfamily.

It localises to the cell inner membrane. It functions in the pathway cofactor biosynthesis; ubiquinone biosynthesis [regulation]. In terms of biological role, is probably a protein kinase regulator of UbiI activity which is involved in aerobic coenzyme Q (ubiquinone) biosynthesis. The sequence is that of Probable protein kinase UbiB from Tolumonas auensis (strain DSM 9187 / NBRC 110442 / TA 4).